The primary structure comprises 280 residues: 2-dehydro-3-deoxyphosphooctonate aldolase (280 aa).

The protein belongs to the KdsA family.

It localises to the cytoplasm. The catalysed reaction is D-arabinose 5-phosphate + phosphoenolpyruvate + H2O = 3-deoxy-alpha-D-manno-2-octulosonate-8-phosphate + phosphate. Its pathway is carbohydrate biosynthesis; 3-deoxy-D-manno-octulosonate biosynthesis; 3-deoxy-D-manno-octulosonate from D-ribulose 5-phosphate: step 2/3. It functions in the pathway bacterial outer membrane biogenesis; lipopolysaccharide biosynthesis. This chain is 2-dehydro-3-deoxyphosphooctonate aldolase, found in Coxiella burnetii (strain Dugway 5J108-111).